Consider the following 78-residue polypeptide: Large ribosomal subunit protein bL28 (78 aa).

Positions 1–20 are disordered; it reads MSRVCQVTSKRPAVGNNRSH.

It belongs to the bacterial ribosomal protein bL28 family.

This chain is Large ribosomal subunit protein bL28, found in Haemophilus ducreyi (strain 35000HP / ATCC 700724).